We begin with the raw amino-acid sequence, 142 residues long: Organic hydroperoxide resistance protein-like 2 (142 aa).

It belongs to the OsmC/Ohr family.

This is Organic hydroperoxide resistance protein-like 2 from Staphylococcus saprophyticus subsp. saprophyticus (strain ATCC 15305 / DSM 20229 / NCIMB 8711 / NCTC 7292 / S-41).